Reading from the N-terminus, the 375-residue chain is Chaperone protein DnaJ (375 aa).

In terms of domain architecture, J spans 5 to 70 (DFYEVLGVEK…QKRAQYDQFG (66 aa)). The CR-type zinc finger occupies 134-216 (GVEKEVSITK…CKGKGTVRKQ (83 aa)). Residues cysteine 147, cysteine 150, cysteine 164, cysteine 167, cysteine 190, cysteine 193, cysteine 204, and cysteine 207 each coordinate Zn(2+). CXXCXGXG motif repeat units lie at residues 147–154 (CETCTGTG), 164–171 (CPKCNGSG), 190–197 (CDMCGGKG), and 204–211 (CSDCKGKG).

This sequence belongs to the DnaJ family. Homodimer. Zn(2+) serves as cofactor.

The protein localises to the cytoplasm. In terms of biological role, participates actively in the response to hyperosmotic and heat shock by preventing the aggregation of stress-denatured proteins and by disaggregating proteins, also in an autonomous, DnaK-independent fashion. Unfolded proteins bind initially to DnaJ; upon interaction with the DnaJ-bound protein, DnaK hydrolyzes its bound ATP, resulting in the formation of a stable complex. GrpE releases ADP from DnaK; ATP binding to DnaK triggers the release of the substrate protein, thus completing the reaction cycle. Several rounds of ATP-dependent interactions between DnaJ, DnaK and GrpE are required for fully efficient folding. Also involved, together with DnaK and GrpE, in the DNA replication of plasmids through activation of initiation proteins. The polypeptide is Chaperone protein DnaJ (Clostridium tetani (strain Massachusetts / E88)).